A 173-amino-acid chain; its full sequence is Spermidine N(1)-acetyltransferase (173 aa).

The N-acetyltransferase domain occupies Leu5–Tyr162. Spermine-binding positions include Met28, Glu33, Glu41, and His49–Asp52. Glu33 serves as a coordination point for Mg(2+). Residues Glu33 and Glu41 each coordinate spermidine. A Mg(2+)-binding site is contributed by Glu75. Glu84 to Gln86 provides a ligand contact to spermine. Residues Ile87–Ile89, Gln94–Arg100, and Asn127–Glu136 contribute to the acetyl-CoA site. Tyr134 serves as the catalytic Proton donor.

This sequence belongs to the acetyltransferase family. As to quaternary structure, homododecamer; dimer of hexamers. Exists in solution in a variety of protein homooligomeric states including dodecamers in an open state. The presence of the polyamines spermidine or spermine shifts the equilibrium to dodecamers and induces the formation of the closed, symmetric dodecamers.

The protein localises to the cytoplasm. It carries out the reaction an alkane-alpha,omega-diamine + acetyl-CoA = an N-acetylalkane-alpha,omega-diamine + CoA + H(+). It catalyses the reaction spermidine + acetyl-CoA = N(1)-acetylspermidine + CoA + H(+). The catalysed reaction is spermidine + acetyl-CoA = N(8)-acetylspermidine + CoA + H(+). The enzyme catalyses spermine + acetyl-CoA = N(1)-acetylspermine + CoA + H(+). It participates in amine and polyamine degradation; spermidine degradation. The protein operates within amine and polyamine degradation; spermine degradation. Its activity is regulated as follows. Allosterically regulated by polyamines. Polyamines trigger conformational changes and induce the symmetric closed dodecameric state of the protein when they bind to their allosteric sites. Functionally, involved in the protection against polyamine toxicity by regulating their concentration. Catalyzes the transfer of an acetyl group from acetyl coenzyme A (AcCoA) to the primary amino groups of spermidine to yield N(1)- and N(8)-acetylspermidine. It can use polyamines such as spermine and N(1)-acetylspermine, but not putrescine or cadaverine. This Vibrio cholerae serotype O1 (strain ATCC 39315 / El Tor Inaba N16961) protein is Spermidine N(1)-acetyltransferase (speG).